Reading from the N-terminus, the 129-residue chain is Ferredoxin-1 (129 aa).

The 2Fe-2S ferredoxin-type domain maps to S29–H120. [2Fe-2S] cluster contacts are provided by C64, C69, C72, and C103.

Belongs to the 2Fe2S plant-type ferredoxin family. [2Fe-2S] cluster serves as cofactor.

Its function is as follows. Ferredoxins are iron-sulfur proteins that transfer electrons in a wide variety of metabolic reactions. In Haloarcula marismortui (strain ATCC 43049 / DSM 3752 / JCM 8966 / VKM B-1809) (Halobacterium marismortui), this protein is Ferredoxin-1 (fer1).